The chain runs to 122 residues: Large ribosomal subunit protein uL22 (122 aa).

Positions 102–122 (VAEGKEMKSSKSHKKNQAEGK) are disordered.

It belongs to the universal ribosomal protein uL22 family. As to quaternary structure, part of the 50S ribosomal subunit.

This protein binds specifically to 23S rRNA; its binding is stimulated by other ribosomal proteins, e.g. L4, L17, and L20. It is important during the early stages of 50S assembly. It makes multiple contacts with different domains of the 23S rRNA in the assembled 50S subunit and ribosome. Functionally, the globular domain of the protein is located near the polypeptide exit tunnel on the outside of the subunit, while an extended beta-hairpin is found that lines the wall of the exit tunnel in the center of the 70S ribosome. This is Large ribosomal subunit protein uL22 from Helicobacter pylori (strain HPAG1).